A 220-amino-acid polypeptide reads, in one-letter code: MKKEKAVVVFSGGQDSTTCLFWAIQQFEEVEAVTFNYNQRHKLEIDCAVEIAKELGIKHTILDMSLLNQLAPNALTRTDMEITHEEGELPSTFVDGRNLLFLSFAAVLAKQVGARHIVTGVCETDFSGYPDCRDVFVKSLNVTLNLSMDYPFVIHTPLMWIDKAETWKLSDELGAFEFVREKTLTCYNGIIGDGCGECPACQLRKAGLDTYLQEREGASN.

ATP is bound at residue 10–20 (FSGGQDSTTCL). 4 residues coordinate Zn(2+): Cys-186, Cys-195, Cys-198, and Cys-201.

It belongs to the QueC family. As to quaternary structure, homodimer. It depends on Zn(2+) as a cofactor.

It catalyses the reaction 7-carboxy-7-deazaguanine + NH4(+) + ATP = 7-cyano-7-deazaguanine + ADP + phosphate + H2O + H(+). The protein operates within purine metabolism; 7-cyano-7-deazaguanine biosynthesis. In terms of biological role, catalyzes the ATP-dependent conversion of 7-carboxy-7-deazaguanine (CDG) to 7-cyano-7-deazaguanine (preQ(0)). The sequence is that of 7-cyano-7-deazaguanine synthase from Bacillus mycoides (strain KBAB4) (Bacillus weihenstephanensis).